Here is a 49-residue protein sequence, read N- to C-terminus: Large ribosomal subunit protein bL33B (49 aa).

It belongs to the bacterial ribosomal protein bL33 family.

This chain is Large ribosomal subunit protein bL33B, found in Oceanobacillus iheyensis (strain DSM 14371 / CIP 107618 / JCM 11309 / KCTC 3954 / HTE831).